The following is a 104-amino-acid chain: Putative Fis-like DNA-binding protein (104 aa).

The segment at residues 80–99 is a DNA-binding region (H-T-H motif); it reads QTKASELLGLNRGTLRKKLK.

The protein belongs to the transcriptional regulatory Fis family.

The polypeptide is Putative Fis-like DNA-binding protein (Pseudomonas aeruginosa (strain ATCC 15692 / DSM 22644 / CIP 104116 / JCM 14847 / LMG 12228 / 1C / PRS 101 / PAO1)).